The chain runs to 767 residues: Ribonucleoside-diphosphate reductase subunit alpha (767 aa).

Residues 1–30 (MHPTLISAPISSSANDAHAGTSQGSHQGHR) are disordered. The segment covering 9 to 26 (PISSSANDAHAGTSQGSH) has biased composition (polar residues). An ATP-cone domain is found at 31-120 (IQVIRRDGSS…VWSLWKDTLV (90 aa)). Substrate-binding positions include threonine 228, 243–244 (SC), glycine 272, 460–464 (NLCCE), and 631–635 (PNTSS). A disulfide bridge connects residues cysteine 244 and cysteine 478. The active-site Proton acceptor is the asparagine 460. Cysteine 462 functions as the Cysteine radical intermediate in the catalytic mechanism. Glutamate 464 (proton acceptor) is an active-site residue.

The protein belongs to the ribonucleoside diphosphate reductase large chain family. Tetramer of two alpha and two beta subunits.

It catalyses the reaction a 2'-deoxyribonucleoside 5'-diphosphate + [thioredoxin]-disulfide + H2O = a ribonucleoside 5'-diphosphate + [thioredoxin]-dithiol. With respect to regulation, under complex allosteric control mediated by deoxynucleoside triphosphates and ATP binding. The type of nucleotide bound at the specificity site determines substrate preference. It seems probable that ATP makes the enzyme reduce CDP and UDP, dGTP favors ADP reduction and dTTP favors GDP reduction. Functionally, provides the precursors necessary for DNA synthesis. Catalyzes the biosynthesis of deoxyribonucleotides from the corresponding ribonucleotides. This is Ribonucleoside-diphosphate reductase subunit alpha (nrdA) from Synechocystis sp. (strain ATCC 27184 / PCC 6803 / Kazusa).